The following is a 291-amino-acid chain: START domain-containing protein 10 (291 aa).

N-acetylmethionine is present on M1. Residues 1 to 23 (MEKPAASTEPQGSRPALGRESVQ) are disordered. The 211-residue stretch at 14-224 (RPALGRESVQ…MYKACIKYPE (211 aa)) folds into the START domain. N6-succinyllysine occurs at positions 94, 197, and 202. Phosphoserine is present on residues S253, S259, S284, and S289. The tract at residues 260–291 (LENIDESAVTESREERAGGAGGEGSDDDTSLT) is disordered.

In terms of processing, phosphorylation at Ser-284 by CK2 negatively regulates lipid transfer activity, possibly by decreasing membrane association. As to expression, testis, kidney, liver, and intestine with the highest level in the testis.

Its subcellular location is the cell projection. The protein localises to the cilium. It is found in the flagellum. The protein resides in the cytoplasm. It localises to the membrane. In terms of biological role, phospholipid transfer protein that preferentially selects lipid species containing a palmitoyl or stearoyl chain on the sn-1 and an unsaturated fatty acyl chain (18:1 or 18:2) on the sn-2 position. Able to transfer phosphatidylcholine (PC) and phosphatidyetanolamline (PE) between membranes. May play metabolic roles in sperm maturation or fertilization. This chain is START domain-containing protein 10 (Stard10), found in Mus musculus (Mouse).